A 785-amino-acid polypeptide reads, in one-letter code: Phenylalanine--tRNA ligase beta subunit (785 aa).

The tRNA-binding domain maps to 39-147 (FPIPRGVVFA…DALPPGTPLS (109 aa)). The region spanning 399–474 (KPPEAIPFRP…RIQGYETIPL (76 aa)) is the B5 domain. Aspartate 452, aspartate 458, glutamate 461, and glutamate 462 together coordinate Mg(2+). In terms of domain architecture, FDX-ACB spans 688-780 (SRHPAAFRDL…ALRARGFGLR (93 aa)).

This sequence belongs to the phenylalanyl-tRNA synthetase beta subunit family. Type 1 subfamily. In terms of assembly, tetramer of two alpha and two beta subunits. Requires Mg(2+) as cofactor.

The protein localises to the cytoplasm. The catalysed reaction is tRNA(Phe) + L-phenylalanine + ATP = L-phenylalanyl-tRNA(Phe) + AMP + diphosphate + H(+). The protein is Phenylalanine--tRNA ligase beta subunit (pheT) of Thermus thermophilus (strain ATCC 27634 / DSM 579 / HB8).